The sequence spans 190 residues: Histone H5 (190 aa).

The interval 1–29 (MTESLVLSPAPAKPKRVKASRRSASHPTY) is disordered. Residues 13 to 24 (KPKRVKASRRSA) show a composition bias toward basic residues. Serine 23, serine 30, serine 146, and serine 167 each carry phosphoserine. Residues 25–98 (SHPTYSEMIA…GASGSFRLAK (74 aa)) enclose the H15 domain. Residues 87-190 (GVGASGSFRL…SGARKSPKKK (104 aa)) are disordered. A compositionally biased stretch (basic residues) spans 104-190 (RSPGKKKKAV…SGARKSPKKK (87 aa)).

The protein belongs to the histone H1/H5 family. In terms of tissue distribution, erythroid cells.

The protein localises to the nucleus. The protein resides in the chromosome. In terms of biological role, histone H5 performs the same function as H1, being necessary for the condensation of nucleosome chains into higher order structures, and replaces histone H1 in certain cells. The sequence is that of Histone H5 from Gallus gallus (Chicken).